The sequence spans 255 residues: Pimeloyl-[acyl-carrier protein] methyl ester esterase (255 aa).

Residues 16 to 242 enclose the AB hydrolase-1 domain; that stretch reads LVLLHGWGLN…AAHAPFISHP (227 aa). Substrate-binding positions include W22, 82–83, and 143–147; these read SL and FLALQ. The active-site Nucleophile is S82. Catalysis depends on residues D207 and H235. Residue H235 participates in substrate binding.

This sequence belongs to the AB hydrolase superfamily. Carboxylesterase BioH family. As to quaternary structure, monomer.

Its subcellular location is the cytoplasm. It catalyses the reaction 6-carboxyhexanoyl-[ACP] methyl ester + H2O = 6-carboxyhexanoyl-[ACP] + methanol + H(+). It functions in the pathway cofactor biosynthesis; biotin biosynthesis. Its function is as follows. The physiological role of BioH is to remove the methyl group introduced by BioC when the pimeloyl moiety is complete. It allows to synthesize pimeloyl-ACP via the fatty acid synthetic pathway through the hydrolysis of the ester bonds of pimeloyl-ACP esters. This Pectobacterium atrosepticum (strain SCRI 1043 / ATCC BAA-672) (Erwinia carotovora subsp. atroseptica) protein is Pimeloyl-[acyl-carrier protein] methyl ester esterase.